Here is a 151-residue protein sequence, read N- to C-terminus: Ribosome maturation factor RimP (151 aa).

This sequence belongs to the RimP family.

It is found in the cytoplasm. Required for maturation of 30S ribosomal subunits. The chain is Ribosome maturation factor RimP from Shewanella frigidimarina (strain NCIMB 400).